The following is a 694-amino-acid chain: Polyribonucleotide nucleotidyltransferase (694 aa).

Mg(2+)-binding residues include Asp486 and Asp492. A KH domain is found at 553-612; sequence PRIETMQIKPTKIASVIGPGGKQIRQIIEETGVQIDVNDLGVVSISASSASAINKAKEII. Residues 622–690 enclose the S1 motif domain; the sequence is GKTYRGRVTS…EKGQLKLSHK (69 aa).

The protein belongs to the polyribonucleotide nucleotidyltransferase family. Mg(2+) is required as a cofactor.

The protein resides in the cytoplasm. The enzyme catalyses RNA(n+1) + phosphate = RNA(n) + a ribonucleoside 5'-diphosphate. Functionally, involved in mRNA degradation. Catalyzes the phosphorolysis of single-stranded polyribonucleotides processively in the 3'- to 5'-direction. This Chlamydia pneumoniae (Chlamydophila pneumoniae) protein is Polyribonucleotide nucleotidyltransferase.